A 1098-amino-acid polypeptide reads, in one-letter code: PAN2-PAN3 deadenylation complex catalytic subunit PAN2 (1098 aa).

WD repeat units lie at residues Ala-19 to Leu-58, Thr-150 to Ser-190, Pro-253 to Val-293, and Pro-300 to Asn-338. Residues Pro-340–Ser-466 are linker. Residues Arg-417–Glu-442 are disordered. The USP domain maps to Ser-466–Pro-839. The Exonuclease domain maps to Ile-894–Phe-1067. Asp-897, Glu-899, Asp-1006, and Asp-1059 together coordinate a divalent metal cation.

Belongs to the peptidase C19 family. PAN2 subfamily. In terms of assembly, forms a heterotrimer with an asymmetric homodimer of the regulatory subunit PAN3 to form the poly(A)-nuclease (PAN) deadenylation complex. A divalent metal cation serves as cofactor.

The protein localises to the cytoplasm. The catalysed reaction is Exonucleolytic cleavage of poly(A) to 5'-AMP.. Positively regulated by the regulatory subunit PAN3. Catalytic subunit of the poly(A)-nuclease (PAN) deadenylation complex, one of two cytoplasmic mRNA deadenylases involved in mRNA turnover. PAN specifically shortens poly(A) tails of RNA and the activity is stimulated by poly(A)-binding protein PAB1. PAN deadenylation is followed by rapid degradation of the shortened mRNA tails by the CCR4-NOT complex. Deadenylated mRNAs are then degraded by two alternative mechanisms, namely exosome-mediated 3'-5' exonucleolytic degradation, or deadenylation-dependent mRNA decaping and subsequent 5'-3' exonucleolytic degradation by XRN1. May also be involved in post-transcriptional maturation of mRNA poly(A) tails. The polypeptide is PAN2-PAN3 deadenylation complex catalytic subunit PAN2 (Meyerozyma guilliermondii (strain ATCC 6260 / CBS 566 / DSM 6381 / JCM 1539 / NBRC 10279 / NRRL Y-324) (Yeast)).